The primary structure comprises 454 residues: L-serine dehydratase TdcG (454 aa).

The protein belongs to the iron-sulfur dependent L-serine dehydratase family. It depends on [4Fe-4S] cluster as a cofactor.

It catalyses the reaction L-serine = pyruvate + NH4(+). It participates in amino-acid degradation; L-threonine degradation via propanoate pathway. The protein is L-serine dehydratase TdcG (tdcG) of Escherichia coli (strain K12).